We begin with the raw amino-acid sequence, 907 residues long: Protein translocase subunit SecA (907 aa).

ATP is bound by residues Gln-87, 105-109, and Asp-511; that span reads GEGKT. Zn(2+) contacts are provided by Cys-891, Cys-893, Cys-902, and His-903.

It belongs to the SecA family. As to quaternary structure, monomer and homodimer. Part of the essential Sec protein translocation apparatus which comprises SecA, SecYEG and auxiliary proteins SecDF-YajC and YidC. Zn(2+) is required as a cofactor.

Its subcellular location is the cell inner membrane. It is found in the cytoplasm. It catalyses the reaction ATP + H2O + cellular proteinSide 1 = ADP + phosphate + cellular proteinSide 2.. Its function is as follows. Part of the Sec protein translocase complex. Interacts with the SecYEG preprotein conducting channel. Has a central role in coupling the hydrolysis of ATP to the transfer of proteins into and across the cell membrane, serving both as a receptor for the preprotein-SecB complex and as an ATP-driven molecular motor driving the stepwise translocation of polypeptide chains across the membrane. The sequence is that of Protein translocase subunit SecA from Aromatoleum aromaticum (strain DSM 19018 / LMG 30748 / EbN1) (Azoarcus sp. (strain EbN1)).